The sequence spans 422 residues: Isocitrate dehydrogenase [NADP] (422 aa).

NADP(+) is bound at residue Thr-94. Residues Ser-103, Asn-105, Arg-109, Arg-119, and Arg-143 each contribute to the D-threo-isocitrate site. Position 310 (Asp-310) interacts with Mg(2+). Residues 344 to 350 (HGTAPKY), Asn-357, Tyr-396, and Arg-400 contribute to the NADP(+) site.

This sequence belongs to the isocitrate and isopropylmalate dehydrogenases family. In terms of assembly, homodimer. Mg(2+) serves as cofactor. The cofactor is Mn(2+).

The enzyme catalyses D-threo-isocitrate + NADP(+) = 2-oxoglutarate + CO2 + NADPH. Its function is as follows. Catalyzes the oxidative decarboxylation of isocitrate to 2-oxoglutarate and carbon dioxide with the concomitant reduction of NADP(+). This chain is Isocitrate dehydrogenase [NADP] (icd), found in Staphylococcus aureus (strain COL).